A 990-amino-acid polypeptide reads, in one-letter code: Storkhead-box protein 1 (990 aa).

The segment covering 396–408 (TTRHKDSSKEVIG) has biased composition (basic and acidic residues). 4 disordered regions span residues 396–471 (TTRH…VHHL), 562–586 (VAKA…PRRV), 712–736 (GLSD…DGGC), and 809–832 (LFSN…SRIP). Over residues 416-431 (KSRRRGSSHKGRHKAR) the composition is skewed to basic residues. The span at 809 to 830 (LFSNAGESPNPDLSDNPGQNSR) shows a compositional bias: polar residues.

Detected in sensory epithelial cells of the inner ear but not in adjacent surrounding tissue (at protein level).

It localises to the nucleus. The protein localises to the cytoplasm. The protein resides in the cytoskeleton. It is found in the microtubule organizing center. Its subcellular location is the centrosome. Involved in regulating the levels of reactive oxidative species and reactive nitrogen species and in mitochondrial homeostasis in the placenta. Required for regulation of inner ear epithelial cell proliferation via the AKT signaling pathway. Involved in cell cycle regulation by binding to the CCNB1 promoter, up-regulating its expression and promoting mitotic entry. Induces phosphorylation of MAPT/tau. This Mus musculus (Mouse) protein is Storkhead-box protein 1.